The sequence spans 80 residues: UPF0125 protein XF_2346 (80 aa).

The protein belongs to the UPF0125 (RnfH) family.

The chain is UPF0125 protein XF_2346 from Xylella fastidiosa (strain 9a5c).